A 743-amino-acid chain; its full sequence is MSRRSRGDDLEDLQYQDTDSDVPEPKENRVKVKWTPEEDETLKALVKKHGQGEWKTIASNLNNRTEQQCQHRWLRVLHPDLVKGPWTKEEDEKVIELVKKYGTKHWTLIAKQLRGRMGKQCRERWHNHLNPEVKKSSWTEEEDRIICQAHKVLGNRWAEIAKLLPGRTDNAVKNHWNSTIKRKVETGGFLTVKASGQQEEREDSGYQAAEDQNHVLLSEPVERSANIPEEPSNILSPKLLTKSPGIRSEQESGGEGSNSESATAIVDSAPEKWMVEYVNFLVPGSDIMESDPEAWCELSSFDLGEDSTVSDVGSPTHAAVTDKPQASNVTEYRLDGHTLSDLCKGNKGELIPISPQPQTAFGTPPSVLKQHKKRKITLSPVTENGGSITTSVTEANSMTPKSTPVKSLPFSPSQFLNFWSKQDALELENPSLTSTPVCSQKTMVTTPLHRDKTPLLQKNSVFITPNNKFAADHVLHTPTPFKNALEKFGSLKPLPPTPHLEEDLKEVLRSESGIELIIVDEPKLERQKRKPHSPMKKVRKSLALDIIDKHPKPSSLTLPSAVSAHMQPQTCDSFLSVSLNESSCSREENSVLNQGFVQVKTSKGAVVQLGNTSQLLTDIGELVKTQCSLRNTETATPFKTENGTFTNTDLCPQSLMDLDTFHSTAVASNKCPTIKTETLFQVKPEKTKMQRHNIMNIPEPMTAAWKTVAFGGSQDQMLMQEKARAILNLTYKHSSTSRALVLS.

A disordered region spans residues 1–29 (MSRRSRGDDLEDLQYQDTDSDVPEPKENR). Acidic residues predominate over residues 9-22 (DLEDLQYQDTDSDV). HTH myb-type domains lie at 26-77 (KENR…LRVL), 78-133 (HPDL…NPEV), and 134-184 (KKSS…KRKV). 3 DNA-binding regions (H-T-H motif) span residues 54–77 (WKTI…LRVL), 106–129 (WTLI…HNHL), and 157–180 (WAEI…NSTI). Disordered stretches follow at residues 221–262 (VERS…SESA) and 381–406 (VTEN…TPVK).

In terms of assembly, component of the DREAM complex.

The protein resides in the nucleus. The polypeptide is Myb-related protein B (mybl2) (Xenopus laevis (African clawed frog)).